The following is a 173-amino-acid chain: Crossover junction endodeoxyribonuclease RuvC (173 aa).

Catalysis depends on residues Asp8, Glu67, and Asp139. Mg(2+) contacts are provided by Asp8, Glu67, and Asp139.

Belongs to the RuvC family. As to quaternary structure, homodimer which binds Holliday junction (HJ) DNA. The HJ becomes 2-fold symmetrical on binding to RuvC with unstacked arms; it has a different conformation from HJ DNA in complex with RuvA. In the full resolvosome a probable DNA-RuvA(4)-RuvB(12)-RuvC(2) complex forms which resolves the HJ. The cofactor is Mg(2+).

It localises to the cytoplasm. It carries out the reaction Endonucleolytic cleavage at a junction such as a reciprocal single-stranded crossover between two homologous DNA duplexes (Holliday junction).. The RuvA-RuvB-RuvC complex processes Holliday junction (HJ) DNA during genetic recombination and DNA repair. Endonuclease that resolves HJ intermediates. Cleaves cruciform DNA by making single-stranded nicks across the HJ at symmetrical positions within the homologous arms, yielding a 5'-phosphate and a 3'-hydroxyl group; requires a central core of homology in the junction. The consensus cleavage sequence is 5'-(A/T)TT(C/G)-3'. Cleavage occurs on the 3'-side of the TT dinucleotide at the point of strand exchange. HJ branch migration catalyzed by RuvA-RuvB allows RuvC to scan DNA until it finds its consensus sequence, where it cleaves and resolves the cruciform DNA. This chain is Crossover junction endodeoxyribonuclease RuvC, found in Citrobacter koseri (strain ATCC BAA-895 / CDC 4225-83 / SGSC4696).